A 506-amino-acid polypeptide reads, in one-letter code: Serine/threonine-protein kinase RIO1 (506 aa).

The interval 22–52 is disordered; the sequence is TASSSSDDEPEQAVVKQEKLEAGEQIEEQYD. Residues 142-506 form the Protein kinase domain; that stretch reads LNIDGCISTG…KKRAHRQHMK (365 aa). ATP-binding positions include 148 to 156, Lys169, and Leu241; that span reads ISTGKEANV. Asp285 serves as the catalytic Proton acceptor. Asn290 is a binding site for ATP. Residues Asn290 and Asp302 each contribute to the Mg(2+) site. Asp302 functions as the 4-aspartylphosphate intermediate in the catalytic mechanism. Residues 418 to 506 are disordered; it reads GDGFGEEHDD…KKRAHRQHMK (89 aa). The span at 424 to 435 shows a compositional bias: acidic residues; sequence EHDDSDDNDDEE. Over residues 454–490 the composition is skewed to basic and acidic residues; the sequence is EKERKIAMHTRNREETAEERKERKAAVKEEKREQRKE. The segment covering 491–506 has biased composition (basic residues); that stretch reads KIPKHLKKRAHRQHMK.

It belongs to the protein kinase superfamily. RIO-type Ser/Thr kinase family. It depends on Mg(2+) as a cofactor. As to expression, expressed in vulva and uterine cells, uterine seam cells (utse), spermatheca and in the nervous system including chemosensory neurons in the head, nerve ring neurons (RID/RIF), inhibitory motor neurons (DA/DD/VA/VD), mechanosensory neurons (ALML/PLML) and tail sensory neurons (DVA//PDA). Also expressed in intestine and pharynx (procorpus) and rectal valve and gland.

It is found in the cytoplasm. It carries out the reaction L-seryl-[protein] + ATP = O-phospho-L-seryl-[protein] + ADP + H(+). The enzyme catalyses L-threonyl-[protein] + ATP = O-phospho-L-threonyl-[protein] + ADP + H(+). Involved in the final steps of cytoplasmic maturation of the 40S ribosomal subunit. Despite the protein kinase domain is proposed to act predominantly as an ATPase. The catalytic activity regulates its dynamic association with the 40S subunit. Plays a role in oogenesis by regulating germ cell proliferation, progression through diplotene and diakinesis stages and oocyte maturation. Regulates germline development probably by regulating the phosphorylation of mpk-1. Involved in larval development. The chain is Serine/threonine-protein kinase RIO1 from Caenorhabditis elegans.